The sequence spans 255 residues: Methylthioribulose-1-phosphate dehydratase (255 aa).

A substrate-binding site is contributed by Cys-98. The Zn(2+) site is built by His-116 and His-118. Catalysis depends on Glu-150, which acts as the Proton donor/acceptor. His-207 is a Zn(2+) binding site.

The protein belongs to the aldolase class II family. MtnB subfamily. Requires Zn(2+) as cofactor.

Its subcellular location is the cytoplasm. The enzyme catalyses 5-(methylsulfanyl)-D-ribulose 1-phosphate = 5-methylsulfanyl-2,3-dioxopentyl phosphate + H2O. It participates in amino-acid biosynthesis; L-methionine biosynthesis via salvage pathway; L-methionine from S-methyl-5-thio-alpha-D-ribose 1-phosphate: step 2/6. Its function is as follows. Catalyzes the dehydration of methylthioribulose-1-phosphate (MTRu-1-P) into 2,3-diketo-5-methylthiopentyl-1-phosphate (DK-MTP-1-P). The polypeptide is Methylthioribulose-1-phosphate dehydratase (Pyricularia oryzae (strain 70-15 / ATCC MYA-4617 / FGSC 8958) (Rice blast fungus)).